A 428-amino-acid chain; its full sequence is Histidine--tRNA ligase (428 aa).

It belongs to the class-II aminoacyl-tRNA synthetase family. In terms of assembly, homodimer.

The protein resides in the cytoplasm. The catalysed reaction is tRNA(His) + L-histidine + ATP = L-histidyl-tRNA(His) + AMP + diphosphate + H(+). This chain is Histidine--tRNA ligase, found in Ectopseudomonas mendocina (strain ymp) (Pseudomonas mendocina).